The following is a 107-amino-acid chain: Nucleoid-associated protein Daro_0807 (107 aa).

This sequence belongs to the YbaB/EbfC family. As to quaternary structure, homodimer.

Its subcellular location is the cytoplasm. It localises to the nucleoid. Its function is as follows. Binds to DNA and alters its conformation. May be involved in regulation of gene expression, nucleoid organization and DNA protection. The sequence is that of Nucleoid-associated protein Daro_0807 from Dechloromonas aromatica (strain RCB).